The chain runs to 352 residues: Histidinol-phosphate aminotransferase (352 aa).

Lys211 is subject to N6-(pyridoxal phosphate)lysine.

This sequence belongs to the class-II pyridoxal-phosphate-dependent aminotransferase family. Histidinol-phosphate aminotransferase subfamily. In terms of assembly, homodimer. It depends on pyridoxal 5'-phosphate as a cofactor.

The enzyme catalyses L-histidinol phosphate + 2-oxoglutarate = 3-(imidazol-4-yl)-2-oxopropyl phosphate + L-glutamate. It participates in amino-acid biosynthesis; L-histidine biosynthesis; L-histidine from 5-phospho-alpha-D-ribose 1-diphosphate: step 7/9. The protein is Histidinol-phosphate aminotransferase of Haemophilus influenzae (strain PittEE).